Here is a 467-residue protein sequence, read N- to C-terminus: Glutamate--tRNA ligase (467 aa).

The short motif at 15–25 is the 'HIGH' region element; that stretch reads PSPTGYLHVGG. Positions 249 to 253 match the 'KMSKS' region motif; the sequence is KLSKR. Lys252 lines the ATP pocket.

This sequence belongs to the class-I aminoacyl-tRNA synthetase family. Glutamate--tRNA ligase type 1 subfamily. In terms of assembly, monomer.

It is found in the cytoplasm. The catalysed reaction is tRNA(Glu) + L-glutamate + ATP = L-glutamyl-tRNA(Glu) + AMP + diphosphate. Catalyzes the attachment of glutamate to tRNA(Glu) in a two-step reaction: glutamate is first activated by ATP to form Glu-AMP and then transferred to the acceptor end of tRNA(Glu). In Coprothermobacter proteolyticus (strain ATCC 35245 / DSM 5265 / OCM 4 / BT), this protein is Glutamate--tRNA ligase.